Reading from the N-terminus, the 337-residue chain is tRNA N6-adenosine threonylcarbamoyltransferase (337 aa).

His-111 and His-115 together coordinate Fe cation. Substrate is bound by residues 134 to 138 (LVSGG), Asp-167, Gly-180, and Asn-272. A Fe cation-binding site is contributed by Asp-300.

The protein belongs to the KAE1 / TsaD family. Fe(2+) is required as a cofactor.

It localises to the cytoplasm. The enzyme catalyses L-threonylcarbamoyladenylate + adenosine(37) in tRNA = N(6)-L-threonylcarbamoyladenosine(37) in tRNA + AMP + H(+). In terms of biological role, required for the formation of a threonylcarbamoyl group on adenosine at position 37 (t(6)A37) in tRNAs that read codons beginning with adenine. Is involved in the transfer of the threonylcarbamoyl moiety of threonylcarbamoyl-AMP (TC-AMP) to the N6 group of A37, together with TsaE and TsaB. TsaD likely plays a direct catalytic role in this reaction. This is tRNA N6-adenosine threonylcarbamoyltransferase from Pseudoalteromonas translucida (strain TAC 125).